The primary structure comprises 202 residues: Large ribosomal subunit protein uL4 (202 aa).

Residues 42–52 show a composition bias toward polar residues; that stretch reads GTKAQKSRSQV. The tract at residues 42-70 is disordered; the sequence is GTKAQKSRSQVSGTTKKSKKQKGGGARHG.

The protein belongs to the universal ribosomal protein uL4 family. As to quaternary structure, part of the 50S ribosomal subunit.

Its function is as follows. One of the primary rRNA binding proteins, this protein initially binds near the 5'-end of the 23S rRNA. It is important during the early stages of 50S assembly. It makes multiple contacts with different domains of the 23S rRNA in the assembled 50S subunit and ribosome. In terms of biological role, forms part of the polypeptide exit tunnel. The polypeptide is Large ribosomal subunit protein uL4 (Xylella fastidiosa (strain Temecula1 / ATCC 700964)).